The sequence spans 178 residues: ATP-dependent protease subunit HslV (178 aa).

The active site involves threonine 7. Positions 162, 165, and 168 each coordinate Na(+).

The protein belongs to the peptidase T1B family. HslV subfamily. As to quaternary structure, a double ring-shaped homohexamer of HslV is capped on each side by a ring-shaped HslU homohexamer. The assembly of the HslU/HslV complex is dependent on binding of ATP.

Its subcellular location is the cytoplasm. The enzyme catalyses ATP-dependent cleavage of peptide bonds with broad specificity.. With respect to regulation, allosterically activated by HslU binding. Its function is as follows. Protease subunit of a proteasome-like degradation complex believed to be a general protein degrading machinery. In Herminiimonas arsenicoxydans, this protein is ATP-dependent protease subunit HslV.